Here is a 168-residue protein sequence, read N- to C-terminus: S-ribosylhomocysteine lyase (168 aa).

3 residues coordinate Fe cation: His-54, His-58, and Cys-128.

The protein belongs to the LuxS family. As to quaternary structure, homodimer. It depends on Fe cation as a cofactor.

It catalyses the reaction S-(5-deoxy-D-ribos-5-yl)-L-homocysteine = (S)-4,5-dihydroxypentane-2,3-dione + L-homocysteine. Functionally, involved in the synthesis of autoinducer 2 (AI-2) which is secreted by bacteria and is used to communicate both the cell density and the metabolic potential of the environment. The regulation of gene expression in response to changes in cell density is called quorum sensing. Catalyzes the transformation of S-ribosylhomocysteine (RHC) to homocysteine (HC) and 4,5-dihydroxy-2,3-pentadione (DPD). The sequence is that of S-ribosylhomocysteine lyase from Neisseria meningitidis serogroup C (strain 053442).